The sequence spans 498 residues: ATP synthase subunit beta, chloroplastic (498 aa).

G172–T179 serves as a coordination point for ATP.

The protein belongs to the ATPase alpha/beta chains family. As to quaternary structure, F-type ATPases have 2 components, CF(1) - the catalytic core - and CF(0) - the membrane proton channel. CF(1) has five subunits: alpha(3), beta(3), gamma(1), delta(1), epsilon(1). CF(0) has four main subunits: a(1), b(1), b'(1) and c(9-12).

The protein localises to the plastid. It is found in the chloroplast thylakoid membrane. The catalysed reaction is ATP + H2O + 4 H(+)(in) = ADP + phosphate + 5 H(+)(out). Its function is as follows. Produces ATP from ADP in the presence of a proton gradient across the membrane. The catalytic sites are hosted primarily by the beta subunits. This Pelargonium hortorum (Common geranium) protein is ATP synthase subunit beta, chloroplastic.